The primary structure comprises 31 residues: Ranatuerin-2 (31 aa).

C23 and C28 are disulfide-bonded.

Belongs to the frog skin active peptide (FSAP) family. Ranatuerin subfamily. As to expression, expressed by the skin glands.

It localises to the secreted. Its function is as follows. Antibacterial activity against Gram-positive bacterium S.aureus (MIC=60 uM). Shows no detectable hemolytic activity towards human erythrocytes. The protein is Ranatuerin-2 of Aquarana catesbeiana (American bullfrog).